A 117-amino-acid chain; its full sequence is MNNIIKMLNEEQMKTDVPQFGAGDTVVVKVRVVEGGKERLQAFEGVVIAKRNRGVHSAFTVRKISNGEGVERAFQTHSPIISSIEVKRRGRVRRAKLYYLRDRSGKSARIREKLATK.

Belongs to the bacterial ribosomal protein bL19 family.

In terms of biological role, this protein is located at the 30S-50S ribosomal subunit interface and may play a role in the structure and function of the aminoacyl-tRNA binding site. The protein is Large ribosomal subunit protein bL19 of Shewanella halifaxensis (strain HAW-EB4).